Consider the following 688-residue polypeptide: Translation initiation factor IF-2 (688 aa).

Residues 50 to 62 (LLSGKEKSEKTKE) are compositionally biased toward basic and acidic residues. The tract at residues 50–95 (LLSGKEKSEKTKEEDDEIETTAKNPIKESINNKKSNKRDDKNEKVN) is disordered. The span at 72–82 (KNPIKESINNK) shows a compositional bias: low complexity. Residues 86–95 (KRDDKNEKVN) are compositionally biased toward basic and acidic residues. Residues 187–354 (KRSPIITVMG…MILLSSEILE (168 aa)) enclose the tr-type G domain. Residues 196–203 (GHVDHGKT) are G1. 196–203 (GHVDHGKT) is a binding site for GTP. Positions 221–225 (GITQH) are G2. The interval 242-245 (DTPG) is G3. Residues 242–246 (DTPGH) and 296–299 (NKID) contribute to the GTP site. The segment at 296–299 (NKID) is G4. Residues 332–334 (SAH) are G5.

Belongs to the TRAFAC class translation factor GTPase superfamily. Classic translation factor GTPase family. IF-2 subfamily.

Its subcellular location is the cytoplasm. One of the essential components for the initiation of protein synthesis. Protects formylmethionyl-tRNA from spontaneous hydrolysis and promotes its binding to the 30S ribosomal subunits. Also involved in the hydrolysis of GTP during the formation of the 70S ribosomal complex. This Clostridium botulinum (strain Langeland / NCTC 10281 / Type F) protein is Translation initiation factor IF-2.